The sequence spans 229 residues: UPF0128 protein aq_756 (229 aa).

The protein belongs to the UPF0128 family.

This Aquifex aeolicus (strain VF5) protein is UPF0128 protein aq_756.